The chain runs to 129 residues: Small ribosomal subunit protein bS16m (129 aa).

It belongs to the bacterial ribosomal protein bS16 family. In terms of assembly, component of the mitochondrial ribosome small subunit (28S) which comprises a 12S rRNA and about 30 distinct proteins.

The protein localises to the mitochondrion. The sequence is that of Small ribosomal subunit protein bS16m (mRpS16) from Drosophila melanogaster (Fruit fly).